We begin with the raw amino-acid sequence, 325 residues long: Biotin synthase (325 aa).

Residues 49–279 (VGDKVELCSI…DKNIRYAGGR (231 aa)) enclose the Radical SAM core domain. Cysteine 66, cysteine 70, and cysteine 73 together coordinate [4Fe-4S] cluster. The [2Fe-2S] cluster site is built by cysteine 144, cysteine 204, and arginine 274.

The protein belongs to the radical SAM superfamily. Biotin synthase family. In terms of assembly, homodimer. [4Fe-4S] cluster serves as cofactor. It depends on [2Fe-2S] cluster as a cofactor.

It catalyses the reaction (4R,5S)-dethiobiotin + (sulfur carrier)-SH + 2 reduced [2Fe-2S]-[ferredoxin] + 2 S-adenosyl-L-methionine = (sulfur carrier)-H + biotin + 2 5'-deoxyadenosine + 2 L-methionine + 2 oxidized [2Fe-2S]-[ferredoxin]. It participates in cofactor biosynthesis; biotin biosynthesis; biotin from 7,8-diaminononanoate: step 2/2. Catalyzes the conversion of dethiobiotin (DTB) to biotin by the insertion of a sulfur atom into dethiobiotin via a radical-based mechanism. The polypeptide is Biotin synthase (Carboxydothermus hydrogenoformans (strain ATCC BAA-161 / DSM 6008 / Z-2901)).